The sequence spans 293 residues: Lipoyl synthase (293 aa).

Positions 47, 52, 58, 73, 77, 80, and 285 each coordinate [4Fe-4S] cluster. Residues 59-274 (WSEGTATFMI…EKIGLELGFR (216 aa)) form the Radical SAM core domain.

It belongs to the radical SAM superfamily. Lipoyl synthase family. [4Fe-4S] cluster serves as cofactor.

It localises to the cytoplasm. The enzyme catalyses [[Fe-S] cluster scaffold protein carrying a second [4Fe-4S](2+) cluster] + N(6)-octanoyl-L-lysyl-[protein] + 2 oxidized [2Fe-2S]-[ferredoxin] + 2 S-adenosyl-L-methionine + 4 H(+) = [[Fe-S] cluster scaffold protein] + N(6)-[(R)-dihydrolipoyl]-L-lysyl-[protein] + 4 Fe(3+) + 2 hydrogen sulfide + 2 5'-deoxyadenosine + 2 L-methionine + 2 reduced [2Fe-2S]-[ferredoxin]. It participates in protein modification; protein lipoylation via endogenous pathway; protein N(6)-(lipoyl)lysine from octanoyl-[acyl-carrier-protein]: step 2/2. Functionally, catalyzes the radical-mediated insertion of two sulfur atoms into the C-6 and C-8 positions of the octanoyl moiety bound to the lipoyl domains of lipoate-dependent enzymes, thereby converting the octanoylated domains into lipoylated derivatives. This chain is Lipoyl synthase, found in Christiangramia forsetii (strain DSM 17595 / CGMCC 1.15422 / KT0803) (Gramella forsetii).